Reading from the N-terminus, the 660-residue chain is Phosphatidylinositol-3-phosphate phosphatase MTMR7 (660 aa).

The Myotubularin phosphatase domain occupies 126–504 (GWVLIDLSEE…FMYKFWSGMY (379 aa)). 3 residues coordinate a 1,2-diacyl-sn-glycero-3-phospho-(1D-myo-inositol-3-phosphate): Asn-250, Asn-275, and Ile-276. Cys-338 serves as the catalytic Phosphocysteine intermediate. The a 1,2-diacyl-sn-glycero-3-phospho-(1D-myo-inositol-3-phosphate) site is built by Ser-339, Asp-340, Gly-341, Trp-342, Asp-343, Arg-344, and Arg-384. A coiled-coil region spans residues 514 to 558 (RQSVTDYLMAVKEETQQLEEELEALEERLEKIQKVQLNCTKVKSK). Residues 554-660 (KVKSKQSEPS…DSDEAVFLTA (107 aa)) form a disordered region. Over residues 566–596 (SGFSTSDNSIANTPQDYSGNMKSFPSRSPSQ) the composition is skewed to polar residues. Position 578 is a phosphothreonine (Thr-578). The segment covering 641-653 (APSEDSGKDRDSD) has biased composition (basic and acidic residues).

This sequence belongs to the protein-tyrosine phosphatase family. Non-receptor class myotubularin subfamily. Heterodimer (via C-terminus) with MTMR9 (via coiled coil domain); the interaction enhances MTMR7 catalytic activity. Does not homodimerize. Interacts with RAB1B (in GDP-bound form).

It localises to the cytoplasm. The protein resides in the endomembrane system. The catalysed reaction is a 1,2-diacyl-sn-glycero-3-phospho-(1D-myo-inositol-3-phosphate) + H2O = a 1,2-diacyl-sn-glycero-3-phospho-(1D-myo-inositol) + phosphate. It carries out the reaction 1D-myo-inositol 1,3-bisphosphate + H2O = 1D-myo-inositol 1-phosphate + phosphate. With respect to regulation, interaction with MTMR9 increases phosphatase activity. Lipid phosphatase that specifically dephosphorylates the D-3 position of phosphatidylinositol 3-phosphate (PtdIns(3)P) and inositol 1,3-bisphosphate (Ins(1,3)P2). This chain is Phosphatidylinositol-3-phosphate phosphatase MTMR7, found in Pongo abelii (Sumatran orangutan).